The primary structure comprises 218 residues: Urease accessory protein UreG (218 aa).

22–29 (GPVGSGKT) serves as a coordination point for GTP.

It belongs to the SIMIBI class G3E GTPase family. UreG subfamily. As to quaternary structure, homodimer. UreD, UreF and UreG form a complex that acts as a GTP-hydrolysis-dependent molecular chaperone, activating the urease apoprotein by helping to assemble the nickel containing metallocenter of UreC. The UreE protein probably delivers the nickel.

It is found in the cytoplasm. Its function is as follows. Facilitates the functional incorporation of the urease nickel metallocenter. This process requires GTP hydrolysis, probably effectuated by UreG. This chain is Urease accessory protein UreG, found in Polaromonas naphthalenivorans (strain CJ2).